We begin with the raw amino-acid sequence, 206 residues long: Ribosomal RNA small subunit methyltransferase G (206 aa).

Residues Gly-73, Leu-78, 124-125, and Arg-139 each bind S-adenosyl-L-methionine; that span reads VE.

It belongs to the methyltransferase superfamily. RNA methyltransferase RsmG family.

The protein resides in the cytoplasm. It catalyses the reaction guanosine(527) in 16S rRNA + S-adenosyl-L-methionine = N(7)-methylguanosine(527) in 16S rRNA + S-adenosyl-L-homocysteine. Specifically methylates the N7 position of guanine in position 527 of 16S rRNA. In Photorhabdus laumondii subsp. laumondii (strain DSM 15139 / CIP 105565 / TT01) (Photorhabdus luminescens subsp. laumondii), this protein is Ribosomal RNA small subunit methyltransferase G.